Reading from the N-terminus, the 199-residue chain is Superoxide dismutase [Mn/Fe] (199 aa).

Fe(3+) is bound by residues His-27, His-81, Asp-161, and His-165. The Mn(2+) site is built by His-27, His-81, Asp-161, and His-165.

The protein belongs to the iron/manganese superoxide dismutase family. In terms of assembly, homodimer. It depends on Mn(2+) as a cofactor. Fe(3+) is required as a cofactor.

The enzyme catalyses 2 superoxide + 2 H(+) = H2O2 + O2. Functionally, destroys superoxide anion radicals which are normally produced within the cells and which are toxic to biological systems. Catalyzes the dismutation of superoxide anion radicals into O2 and H2O2 by successive reduction and oxidation of the transition metal ion at the active site. The sequence is that of Superoxide dismutase [Mn/Fe] (sodA) from Staphylococcus saprophyticus subsp. saprophyticus (strain ATCC 15305 / DSM 20229 / NCIMB 8711 / NCTC 7292 / S-41).